Reading from the N-terminus, the 379-residue chain is Homoserine O-succinyltransferase (379 aa).

The AB hydrolase-1 domain maps to 51 to 360 (NAVLICHALS…DAPQGHDAFL (310 aa)). The active-site Nucleophile is the Ser-157. Residue Arg-227 participates in substrate binding. Residues Asp-323 and His-356 contribute to the active site. Asp-357 is a binding site for substrate.

Belongs to the AB hydrolase superfamily. MetX family. As to quaternary structure, homodimer.

The protein localises to the cytoplasm. It catalyses the reaction L-homoserine + succinyl-CoA = O-succinyl-L-homoserine + CoA. The protein operates within amino-acid biosynthesis; L-methionine biosynthesis via de novo pathway; O-succinyl-L-homoserine from L-homoserine: step 1/1. Its function is as follows. Transfers a succinyl group from succinyl-CoA to L-homoserine, forming succinyl-L-homoserine. This chain is Homoserine O-succinyltransferase, found in Pseudomonas fluorescens (strain ATCC BAA-477 / NRRL B-23932 / Pf-5).